Consider the following 835-residue polypeptide: Disease resistance protein RPP13 (835 aa).

The stretch at M25–I41 forms a coiled coil. Residues S144 to E453 form the NB-ARC domain. Position 192–199 (G192–T199) interacts with ATP.

This sequence belongs to the disease resistance NB-LRR family. RPP13 subfamily.

Its function is as follows. Disease resistance protein. Resistance proteins guard the plant against pathogens that contain an appropriate avirulence protein via an indirect interaction with this avirulence protein. That triggers a defense system including the hypersensitive response, which restricts the pathogen growth. In contrast to other resistance proteins, it works independently of ESD1 and NSD1 proteins and does not require the accumulation of salicylic acid, suggesting the existence of an independent signaling pathway. The specificity to avirulence proteins differs in the different cultivars. The sequence is that of Disease resistance protein RPP13 (RPP13) from Arabidopsis thaliana (Mouse-ear cress).